The primary structure comprises 63 residues: Conotoxin Vi5.1a (63 aa).

The N-terminal stretch at 1 to 22 is a signal peptide; that stretch reads MRCVPVFIILLLLIPSAPSADA. Positions 23–50 are excised as a propeptide; that stretch reads QPKTKDDVPLASYHDNAERTLQRLWNQR. Position 62 is a proline amide (Pro62).

The protein belongs to the conotoxin T superfamily. Contains 2 disulfide bonds that can be either 'C1-C3, C2-C4' or 'C1-C4, C2-C3', since these disulfide connectivities have been observed for conotoxins with cysteine framework V (for examples, see AC P0DQQ7 and AC P81755). Expressed by the venom duct.

The protein resides in the secreted. This Conus virgo (Virgin cone) protein is Conotoxin Vi5.1a.